The primary structure comprises 100 residues: NADH-quinone oxidoreductase subunit K (100 aa).

Transmembrane regions (helical) follow at residues 2 to 22, 29 to 49, and 63 to 83; these read VPTTYYLALSGLLFALGMIGV, IMVFLSVELMLNAANLSLVAF, and FIVMTLAAAEVAIGLAIIVAI.

This sequence belongs to the complex I subunit 4L family. In terms of assembly, NDH-1 is composed of 15 different subunits. Subunits NuoA, H, J, K, L, M, N constitute the membrane sector of the complex.

Its subcellular location is the cell membrane. It catalyses the reaction a quinone + NADH + 5 H(+)(in) = a quinol + NAD(+) + 4 H(+)(out). NDH-1 shuttles electrons from NADH, via FMN and iron-sulfur (Fe-S) centers, to quinones in the respiratory chain. The immediate electron acceptor for the enzyme in this species is believed to be a menaquinone. Couples the redox reaction to proton translocation (for every two electrons transferred, four hydrogen ions are translocated across the cytoplasmic membrane), and thus conserves the redox energy in a proton gradient. The chain is NADH-quinone oxidoreductase subunit K from Deinococcus deserti (strain DSM 17065 / CIP 109153 / LMG 22923 / VCD115).